We begin with the raw amino-acid sequence, 135 residues long: HTH-type transcriptional activator AarP (135 aa).

One can recognise an HTH araC/xylS-type domain in the interval 22-120 (SEILVWIEGN…GISPSLYRLS (99 aa)). 2 consecutive DNA-binding regions (H-T-H motif) follow at residues 39-60 (DDIA…RKIV) and 87-110 (VIDI…KAYL).

Transcriptional activator of 2'-N-acetyltransferase. In Providencia stuartii, this protein is HTH-type transcriptional activator AarP (aarP).